The chain runs to 312 residues: UPF0725 protein At3g19520 (312 aa).

The protein belongs to the UPF0725 (EMB2204) family.

The sequence is that of UPF0725 protein At3g19520 from Arabidopsis thaliana (Mouse-ear cress).